Here is a 284-residue protein sequence, read N- to C-terminus: Acetylglutamate kinase (284 aa).

Substrate-binding positions include 64–65 (GG), Arg-86, and Asn-181.

It belongs to the acetylglutamate kinase family. ArgB subfamily.

The protein resides in the cytoplasm. The enzyme catalyses N-acetyl-L-glutamate + ATP = N-acetyl-L-glutamyl 5-phosphate + ADP. The protein operates within amino-acid biosynthesis; L-arginine biosynthesis; N(2)-acetyl-L-ornithine from L-glutamate: step 2/4. Functionally, catalyzes the ATP-dependent phosphorylation of N-acetyl-L-glutamate. This Wolinella succinogenes (strain ATCC 29543 / DSM 1740 / CCUG 13145 / JCM 31913 / LMG 7466 / NCTC 11488 / FDC 602W) (Vibrio succinogenes) protein is Acetylglutamate kinase.